The following is an 897-amino-acid chain: Valine--tRNA ligase (897 aa).

Residues 46-56 (PNVTGSLHMGH) carry the 'HIGH' region motif. The 'KMSKS' region motif lies at 532-536 (KMSKT). Lysine 535 is a binding site for ATP. Positions 839–897 (LRRSLEKLDKESGVLAARLDNASYLANAPAELVTESRAKLAEQRAQAAILAEQLARLEN) form a coiled coil.

This sequence belongs to the class-I aminoacyl-tRNA synthetase family. ValS type 1 subfamily. As to quaternary structure, monomer.

Its subcellular location is the cytoplasm. It carries out the reaction tRNA(Val) + L-valine + ATP = L-valyl-tRNA(Val) + AMP + diphosphate. Its function is as follows. Catalyzes the attachment of valine to tRNA(Val). As ValRS can inadvertently accommodate and process structurally similar amino acids such as threonine, to avoid such errors, it has a 'posttransfer' editing activity that hydrolyzes mischarged Thr-tRNA(Val) in a tRNA-dependent manner. The sequence is that of Valine--tRNA ligase from Gloeobacter violaceus (strain ATCC 29082 / PCC 7421).